The primary structure comprises 295 residues: Mitochondrial dicarboxylate transporter (295 aa).

3 Solcar repeats span residues 4–88 (KQVK…LKEH), 96–188 (TNMW…FKNF), and 198–286 (KKNS…LKKY). Transmembrane regions (helical) follow at residues 8 to 24 (YPWW…VMNT), 63 to 82 (GLSA…FGMY), 98 to 122 (MWYL…ADLI), 163 to 182 (GWKP…VVTY), 204 to 224 (LTSS…ADVI), and 262 to 280 (WVPS…FFAM).

The protein belongs to the mitochondrial carrier (TC 2.A.29) family. Homodimer.

The protein resides in the mitochondrion inner membrane. In terms of biological role, mitochondrial dicarboxylic transporter catalyzing the exchange of dicarboxylic acids like malate and succinate for inorganic phosphate. Required for growth on ethanol and acetate. The sequence is that of Mitochondrial dicarboxylate transporter (DIC1) from Candida glabrata (strain ATCC 2001 / BCRC 20586 / JCM 3761 / NBRC 0622 / NRRL Y-65 / CBS 138) (Yeast).